Reading from the N-terminus, the 858-residue chain is Leucine--tRNA ligase (858 aa).

Residues 53–63 (PYPSGNLHMGH) carry the 'HIGH' region motif. The 'KMSKS' region motif lies at 622–626 (KMSKS). K625 provides a ligand contact to ATP.

The protein belongs to the class-I aminoacyl-tRNA synthetase family.

It is found in the cytoplasm. The catalysed reaction is tRNA(Leu) + L-leucine + ATP = L-leucyl-tRNA(Leu) + AMP + diphosphate. This chain is Leucine--tRNA ligase, found in Prochlorococcus marinus subsp. pastoris (strain CCMP1986 / NIES-2087 / MED4).